Consider the following 148-residue polypeptide: 3-hydroxyacyl-[acyl-carrier-protein] dehydratase FabZ (148 aa).

His49 is a catalytic residue.

Belongs to the thioester dehydratase family. FabZ subfamily.

Its subcellular location is the cytoplasm. The catalysed reaction is a (3R)-hydroxyacyl-[ACP] = a (2E)-enoyl-[ACP] + H2O. Involved in unsaturated fatty acids biosynthesis. Catalyzes the dehydration of short chain beta-hydroxyacyl-ACPs and long chain saturated and unsaturated beta-hydroxyacyl-ACPs. The chain is 3-hydroxyacyl-[acyl-carrier-protein] dehydratase FabZ from Ehrlichia canis (strain Jake).